We begin with the raw amino-acid sequence, 208 residues long: Superoxide dismutase [Mn] (208 aa).

Mn(2+)-binding residues include His27, His81, Asp168, and His172.

The protein belongs to the iron/manganese superoxide dismutase family. Homodimer. Mn(2+) serves as cofactor.

The enzyme catalyses 2 superoxide + 2 H(+) = H2O2 + O2. Destroys superoxide anion radicals which are normally produced within the cells and which are toxic to biological systems. The polypeptide is Superoxide dismutase [Mn] (sodA) (Buchnera aphidicola subsp. Baizongia pistaciae (strain Bp)).